The following is a 217-amino-acid chain: 3,4-dihydroxy-2-butanone 4-phosphate synthase (217 aa).

Residues 37 to 38, Asp42, 150 to 154, and Glu174 each bind D-ribulose 5-phosphate; these read RE and RRGHT. Glu38 contributes to the Mg(2+) binding site. Residue His153 participates in Mg(2+) binding.

Belongs to the DHBP synthase family. Homodimer. Mg(2+) serves as cofactor. Mn(2+) is required as a cofactor.

It carries out the reaction D-ribulose 5-phosphate = (2S)-2-hydroxy-3-oxobutyl phosphate + formate + H(+). It participates in cofactor biosynthesis; riboflavin biosynthesis; 2-hydroxy-3-oxobutyl phosphate from D-ribulose 5-phosphate: step 1/1. Catalyzes the conversion of D-ribulose 5-phosphate to formate and 3,4-dihydroxy-2-butanone 4-phosphate. The protein is 3,4-dihydroxy-2-butanone 4-phosphate synthase of Tolumonas auensis (strain DSM 9187 / NBRC 110442 / TA 4).